Reading from the N-terminus, the 311-residue chain is Sulfate adenylyltransferase subunit 2 (311 aa).

Belongs to the PAPS reductase family. CysD subfamily. Heterodimer composed of CysD, the smaller subunit, and CysN.

The enzyme catalyses sulfate + ATP + H(+) = adenosine 5'-phosphosulfate + diphosphate. The protein operates within sulfur metabolism; hydrogen sulfide biosynthesis; sulfite from sulfate: step 1/3. Functionally, with CysN forms the ATP sulfurylase (ATPS) that catalyzes the adenylation of sulfate producing adenosine 5'-phosphosulfate (APS) and diphosphate, the first enzymatic step in sulfur assimilation pathway. APS synthesis involves the formation of a high-energy phosphoric-sulfuric acid anhydride bond driven by GTP hydrolysis by CysN coupled to ATP hydrolysis by CysD. The chain is Sulfate adenylyltransferase subunit 2 from Methylobacterium sp. (strain 4-46).